The primary structure comprises 198 residues: Glycerol-3-phosphate acyltransferase (198 aa).

Transmembrane regions (helical) follow at residues 5-25 (AVIL…GYLI), 114-134 (VLIM…IAVL), and 154-176 (AFAL…LVAV).

It belongs to the PlsY family. In terms of assembly, probably interacts with PlsX.

It is found in the cell membrane. The catalysed reaction is an acyl phosphate + sn-glycerol 3-phosphate = a 1-acyl-sn-glycero-3-phosphate + phosphate. It functions in the pathway lipid metabolism; phospholipid metabolism. Catalyzes the transfer of an acyl group from acyl-phosphate (acyl-PO(4)) to glycerol-3-phosphate (G3P) to form lysophosphatidic acid (LPA). This enzyme utilizes acyl-phosphate as fatty acyl donor, but not acyl-CoA or acyl-ACP. This chain is Glycerol-3-phosphate acyltransferase, found in Desulforudis audaxviator (strain MP104C).